Here is a 401-residue protein sequence, read N- to C-terminus: Exodeoxyribonuclease 7 large subunit (401 aa).

The protein belongs to the XseA family. As to quaternary structure, heterooligomer composed of large and small subunits.

The protein localises to the cytoplasm. The enzyme catalyses Exonucleolytic cleavage in either 5'- to 3'- or 3'- to 5'-direction to yield nucleoside 5'-phosphates.. In terms of biological role, bidirectionally degrades single-stranded DNA into large acid-insoluble oligonucleotides, which are then degraded further into small acid-soluble oligonucleotides. The chain is Exodeoxyribonuclease 7 large subunit from Syntrophotalea carbinolica (strain DSM 2380 / NBRC 103641 / GraBd1) (Pelobacter carbinolicus).